Here is a 956-residue protein sequence, read N- to C-terminus: Translation initiation factor IF-2 (956 aa).

Residues 50–351 form a disordered region; it reads FPADSGGAAN…APSIGGVQVP (302 aa). Over residues 64–95 the composition is skewed to pro residues; it reads APKPARAPKPAPKAAPAPPVEEAPAEPAPPAA. 2 stretches are compositionally biased toward low complexity: residues 96-107 and 121-136; these read PEVVAAPEAPVA and PEAP…ARPA. Residues 146-155 are compositionally biased toward basic and acidic residues; it reads AAEKPADTRT. Gly residues-rich tracts occupy residues 171–192 and 206–234; these read RPGG…GGPR and RPGG…GQGG. Low complexity predominate over residues 235–254; the sequence is SRPSPGMMPGRSAVGRPGAP. Residues 255-320 are compositionally biased toward gly residues; sequence ARGGSGGPGG…GTQGAFGRAG (66 aa). The segment covering 324–333 has biased composition (basic residues); that stretch reads VRARKSRRAK. The tr-type G domain occupies 448 to 619; sequence ARPPVVTVMG…AVLLTADAAL (172 aa). The segment at 457 to 464 is G1; the sequence is GHVDHGKT. 457 to 464 is a GTP binding site; the sequence is GHVDHGKT. Residues 482 to 486 are G2; it reads GITQH. The interval 507–510 is G3; that stretch reads DTPG. Residues 507–511 and 561–564 contribute to the GTP site; these read DTPGH and NKVD. Positions 561–564 are G4; sequence NKVD. Residues 597–599 are G5; sequence SAK.

Belongs to the TRAFAC class translation factor GTPase superfamily. Classic translation factor GTPase family. IF-2 subfamily.

Its subcellular location is the cytoplasm. Its function is as follows. One of the essential components for the initiation of protein synthesis. Protects formylmethionyl-tRNA from spontaneous hydrolysis and promotes its binding to the 30S ribosomal subunits. Also involved in the hydrolysis of GTP during the formation of the 70S ribosomal complex. This chain is Translation initiation factor IF-2, found in Beutenbergia cavernae (strain ATCC BAA-8 / DSM 12333 / CCUG 43141 / JCM 11478 / NBRC 16432 / NCIMB 13614 / HKI 0122).